The following is a 230-amino-acid chain: Ribonuclease 3 (230 aa).

The region spanning 10-133 (DPRLLSRIGY…IIGAIYLDSS (124 aa)) is the RNase III domain. Residue Glu-46 participates in Mg(2+) binding. Asp-50 is a catalytic residue. Residues Asp-119 and Glu-122 each contribute to the Mg(2+) site. Glu-122 is a catalytic residue. The DRBM domain occupies 161-230 (DPKSRLQEYL…AAEILKLLEQ (70 aa)).

Belongs to the ribonuclease III family. In terms of assembly, homodimer. It depends on Mg(2+) as a cofactor.

The protein resides in the cytoplasm. It catalyses the reaction Endonucleolytic cleavage to 5'-phosphomonoester.. In terms of biological role, digests double-stranded RNA. Involved in the processing of primary rRNA transcript to yield the immediate precursors to the large and small rRNAs (23S and 16S). Processes some mRNAs, and tRNAs when they are encoded in the rRNA operon. Processes pre-crRNA and tracrRNA of type II CRISPR loci if present in the organism. The polypeptide is Ribonuclease 3 (Acinetobacter baumannii (strain SDF)).